The chain runs to 173 residues: Protein-export protein SecB (173 aa).

A disordered region spans residues 148-173 (QQQKQRREQGTSDSAPSGSPDNGGRQ). Residues 158 to 167 (TSDSAPSGSP) are compositionally biased toward polar residues.

This sequence belongs to the SecB family. In terms of assembly, homotetramer, a dimer of dimers. One homotetramer interacts with 1 SecA dimer.

The protein localises to the cytoplasm. In terms of biological role, one of the proteins required for the normal export of preproteins out of the cell cytoplasm. It is a molecular chaperone that binds to a subset of precursor proteins, maintaining them in a translocation-competent state. It also specifically binds to its receptor SecA. The sequence is that of Protein-export protein SecB from Halorhodospira halophila (strain DSM 244 / SL1) (Ectothiorhodospira halophila (strain DSM 244 / SL1)).